A 369-amino-acid polypeptide reads, in one-letter code: 3-dehydroquinate synthase (369 aa).

Residues 75 to 80 (DGEEHK), 109 to 113 (GVIGD), 133 to 134 (TT), lysine 146, lysine 155, and 173 to 176 (TLKT) each bind NAD(+). Positions 188, 251, and 268 each coordinate Zn(2+).

It belongs to the sugar phosphate cyclases superfamily. Dehydroquinate synthase family. Co(2+) serves as cofactor. The cofactor is Zn(2+). Requires NAD(+) as cofactor.

Its subcellular location is the cytoplasm. It carries out the reaction 7-phospho-2-dehydro-3-deoxy-D-arabino-heptonate = 3-dehydroquinate + phosphate. The protein operates within metabolic intermediate biosynthesis; chorismate biosynthesis; chorismate from D-erythrose 4-phosphate and phosphoenolpyruvate: step 2/7. Its function is as follows. Catalyzes the conversion of 3-deoxy-D-arabino-heptulosonate 7-phosphate (DAHP) to dehydroquinate (DHQ). The chain is 3-dehydroquinate synthase from Legionella pneumophila (strain Lens).